The primary structure comprises 1832 residues: Multifunctional protein pyr-3 (1832 aa).

Residues 2–400 (AATVYRPATA…PGPRDTEFLF (399 aa)) form a GATase (Glutamine amidotransferase) region. L-glutamine-binding residues include Ser64, Gly273, and Gly275. The Glutamine amidotransferase type-1 domain maps to 228 to 413 (RILCLDVGMK…IQTVAKCTTD (186 aa)). Catalysis depends on Cys302, which acts as the Nucleophile; for GATase activity. Leu303, Gln306, Asn344, Gly346, and Tyr347 together coordinate L-glutamine. Residues His386 and Glu388 each act as for GATase activity in the active site. Residues 401 to 442 (DVFIQTVAKCTTDNTLLQKGVEFPGGTTEENERLHPRVDVKK) form a linker region. The interval 443-983 (VLVLGSGGLS…SEHDVSFEDR (541 aa)) is CPSase A. The CPSase (Carbamoyl phosphate synthase) stretch occupies residues 443–1484 (VLVLGSGGLS…TNVKNAKILV (1042 aa)). Positions 560, 600, 606, 607, 637, 639, 644, 670, 671, 672, 713, and 727 each coordinate ATP. 2 ATP-grasp domains span residues 564-756 (ARSM…KLGL) and 1102-1293 (SRML…KAIM). Mg(2+)-binding residues include Gln713, Glu727, and Asn729. Mn(2+)-binding residues include Gln713, Glu727, and Asn729. Positions 984-1484 (GVMVLGSGVY…TNVKNAKILV (501 aa)) are CPSase B. Arg1138, Lys1177, Ile1179, Glu1184, Gly1209, Val1210, His1211, Ser1212, Gln1252, and Glu1264 together coordinate ATP. The Mg(2+) site is built by Gln1252, Glu1264, and Asn1266. Positions 1252, 1264, and 1266 each coordinate Mn(2+). Positions 1359-1507 (FKVPKKNILL…RDYQTSHTPL (149 aa)) constitute an MGS-like domain. The interval 1485–1528 (EAIARYRDMEIGERDYQTSHTPLQLSGQVNFTLQDSLSRPHSFK) is linker. Positions 1529–1832 (KAHVLSVEQY…MALLALVMSG (304 aa)) are ATCase (Aspartate transcarbamylase). The carbamoyl phosphate site is built by Arg1581 and Thr1582. Lys1609 is an L-aspartate binding site. Residues Arg1630, His1658, and Gln1661 each contribute to the carbamoyl phosphate site. L-aspartate contacts are provided by Arg1691 and Arg1754. Residues Leu1793 and Pro1794 each contribute to the carbamoyl phosphate site.

The protein in the N-terminal section; belongs to the CarA family. This sequence in the central section; belongs to the CarB family. In the C-terminal section; belongs to the aspartate/ornithine carbamoyltransferase superfamily. ATCase family. Mg(2+) is required as a cofactor. Requires Mn(2+) as cofactor.

The protein resides in the cytoplasm. Its subcellular location is the nucleus. The catalysed reaction is hydrogencarbonate + L-glutamine + 2 ATP + H2O = carbamoyl phosphate + L-glutamate + 2 ADP + phosphate + 2 H(+). It carries out the reaction L-glutamine + H2O = L-glutamate + NH4(+). The enzyme catalyses hydrogencarbonate + NH4(+) + 2 ATP = carbamoyl phosphate + 2 ADP + phosphate + 2 H(+). It catalyses the reaction carbamoyl phosphate + L-aspartate = N-carbamoyl-L-aspartate + phosphate + H(+). It participates in pyrimidine metabolism; UMP biosynthesis via de novo pathway; (S)-dihydroorotate from bicarbonate: step 1/3. It functions in the pathway pyrimidine metabolism; UMP biosynthesis via de novo pathway; (S)-dihydroorotate from bicarbonate: step 2/3. Both CPSase and ATCase activities are feedback inhibited by the end product UTP. Its function is as follows. Multifunctional protein that encodes the first 2 enzymatic activities of the de novo pyrimidine pathway: carbamoylphosphate synthetase (CPSase; EC 6.3.5.5) and aspartate transcarbamylase (ATCase; EC 2.1.3.2). The CPSase-function is accomplished in 2 steps, by a glutamine-dependent amidotransferase activity (GATase) that binds and cleaves glutamine to produce ammonia, followed by an ammonium-dependent carbamoyl phosphate synthetase, which reacts with the ammonia, hydrogencarbonate and ATP to form carbamoyl phosphate. The endogenously produced carbamoyl phosphate is sequestered and channeled to the ATCase active site. ATCase then catalyzes the formation of carbamoyl-L-aspartate from L-aspartate and carbamoyl phosphate. The protein is Multifunctional protein pyr-3 (pyr-3) of Neurospora crassa (strain ATCC 24698 / 74-OR23-1A / CBS 708.71 / DSM 1257 / FGSC 987).